Consider the following 564-residue polypeptide: MGNWVVNHWFSVLFLVVWLGLNVFLFVDAFLKYEKADKYYYTRKILGSTLACARASALCLNFNSTLILLPVCRNLLSFLRGTCSFCSRTLRKQLDHNLTFHKLVAYMICLHTAIHIIAHLFNFDCYSRSRQATDGSLASILSSLSHDEKKGGSWLNPIQSRNTTVEYVTFTSIAGLTGVIMTIALILMVTSATEFIRRSYFEVFWYTHHLFIFYILGLGIHGIGGIVRGQTEESMNESHPRKCAESFEMWDDRDSHCRRPKFEGHPPESWKWILAPVILYICERILRFYRSQQKVVITKVVMHPSKVLELQMNKRGFSMEVGQYIFVNCPSISLLEWHPFTLTSAPEEDFFSIHIRAAGDWTENLIRAFEQQYSPIPRIEVDGPFGTASEDVFQYEVAVLVGAGIGVTPFASILKSIWYKFQCADHNLKTKKIYFYWICRETGAFSWFNNLLTSLEQEMEELGKVGFLNYRLFLTGWDSNIVGHAALNFDKATDIVTGLKQKTSFGRPMWDNEFSTIATSHPKSVVGVFLCGPRTLAKSLRKCCHRYSSLDPRKVQFYFNKENF.

Residues 1–9 (MGNWVVNHW) lie on the Cytoplasmic side of the membrane. The helical transmembrane segment at 10–30 (FSVLFLVVWLGLNVFLFVDAF) threads the bilayer. The Extracellular segment spans residues 31-44 (LKYEKADKYYYTRK). Residues 45-72 (ILGSTLACARASALCLNFNSTLILLPVC) form a helical membrane-spanning segment. The region spanning 54 to 283 (RASALCLNFN…LAPVILYICE (230 aa)) is the Ferric oxidoreductase domain. Residues 73 to 102 (RNLLSFLRGTCSFCSRTLRKQLDHNLTFHK) are Cytoplasmic-facing. His-101 and His-115 together coordinate heme. A helical membrane pass occupies residues 103–123 (LVAYMICLHTAIHIIAHLFNF). Residues 124–168 (DCYSRSRQATDGSLASILSSLSHDEKKGGSWLNPIQSRNTTVEYV) lie on the Extracellular side of the membrane. Residue Asn-162 is glycosylated (N-linked (GlcNAc...) asparagine). Residues 169–189 (TFTSIAGLTGVIMTIALILMV) traverse the membrane as a helical segment. The Cytoplasmic portion of the chain corresponds to 190–206 (TSATEFIRRSYFEVFWY). The helical transmembrane segment at 207 to 227 (THHLFIFYILGLGIHGIGGIV) threads the bilayer. His-209 and His-221 together coordinate heme. Over 228 to 396 (RGQTEESMNE…TASEDVFQYE (169 aa)) the chain is Extracellular. N-linked (GlcNAc...) asparagine glycosylation occurs at Asn-236. The 108-residue stretch at 284–391 (RILRFYRSQQ…DGPFGTASED (108 aa)) folds into the FAD-binding FR-type domain. 338-344 (HPFTLTS) is an FAD binding site. A helical transmembrane segment spans residues 397–417 (VAVLVGAGIGVTPFASILKSI). Residues 397 to 536 (VAVLVGAGIG…GVFLCGPRTL (140 aa)) form an interaction with NOXO1 region. Over 418-564 (WYKFQCADHN…VQFYFNKENF (147 aa)) the chain is Cytoplasmic. At Thr-430 the chain carries Phosphothreonine.

As to quaternary structure, NOX1, NOXA1, NOXO1, RAC1 and CYBA forms a functional multimeric complex supporting reactive oxygen species (ROS) production. Interacts with NOXO1. Interacts (via FAD-binding FR-type domain) with ARHGEF7 (via PH domain). The phosphorylated form at Thr-430 interacts with NOXA1 with greater affinity. FAD serves as cofactor. In terms of processing, phosphorylation at Thr-430 mediated by PKC/PRKBC positively regulates its interaction with NOXA1 and enzyme activity. Detected in colon, uterus, prostate, and colon carcinoma, but not in peripheral blood leukocytes.

Its subcellular location is the cell projection. It localises to the invadopodium membrane. It is found in the cell membrane. It carries out the reaction NADPH + 2 O2 = 2 superoxide + NADP(+) + H(+). Its activity is regulated as follows. The oxidase activity is potentiated by NOXA1, NOXO1 and RAC1. In terms of biological role, NADPH oxidase that catalyzes the generation of superoxide from molecular oxygen utilizing NADPH as an electron donor. The polypeptide is NADPH oxidase 1 (Homo sapiens (Human)).